A 588-amino-acid polypeptide reads, in one-letter code: uncharacterized protein (588 aa).

A run of 7 helical transmembrane segments spans residues 14 to 34 (FLLFLPYFIGLLFLGFIKGIV), 49 to 69 (AVILSLLPVHIVWTFYSIVSA), 78 to 98 (IFLCLCLPAAIILWPIVGILG), 184 to 204 (ALVVSVLGILVDPPVISLVAI), 235 to 255 (VPIAGLAILLWPLAVTGAVIG), 257 to 274 (VISSIFLGAYAGVVSYQE), and 275 to 292 (SSFYYGLCYIVASVSIYD). Phosphoserine is present on serine 486. The disordered stretch occupies residues 566–588 (RKGSVNGSDQESQKGVSRNVDIV). Residues 570–581 (VNGSDQESQKGV) are compositionally biased toward polar residues.

The protein localises to the membrane. This is an uncharacterized protein from Arabidopsis thaliana (Mouse-ear cress).